The sequence spans 525 residues: G-protein regulator 2 (525 aa).

The 22-residue stretch at P424–L445 folds into the GoLoco domain. The interval T489–K525 is disordered.

Interacts with gpr-1; gpr-1 forms a complex with lin-5 and GDP-bound goa-1.

The protein localises to the cytoplasm. It localises to the cell cortex. Its subcellular location is the cytoskeleton. It is found in the spindle. In terms of biological role, in the 1-cell embryo, probably together with gpr-1, controls nuclear rotation and spindle elongation during mitosis. Complex of gpr-1 and gpr-2, in association with lin-5, activates G-protein signaling to affect mitotic spindle force. Polarity determinants (par genes) may regulate lin-5/gpr-1/gpr-2/goa-1 locally to create the asymmetric forces that drive spindle movement. The chain is G-protein regulator 2 (gpr-2) from Caenorhabditis elegans.